The following is a 256-amino-acid chain: Probable enoyl-CoA hydratase echA14 (256 aa).

A disordered region spans residues 235 to 256 (GPQAKSVQSPEFAARLAAAQHR).

It belongs to the enoyl-CoA hydratase/isomerase family.

It catalyses the reaction a (3S)-3-hydroxyacyl-CoA = a (2E)-enoyl-CoA + H2O. It carries out the reaction a 4-saturated-(3S)-3-hydroxyacyl-CoA = a (3E)-enoyl-CoA + H2O. Could possibly oxidize fatty acids using specific components. This Mycobacterium tuberculosis (strain CDC 1551 / Oshkosh) protein is Probable enoyl-CoA hydratase echA14 (echA14).